An 840-amino-acid polypeptide reads, in one-letter code: MWSGIPIFALLSSIGIAAAETGLDGWLRYASVPCNGNCQRALPSHIVTLNSTRSSPVYVAGQELQDGLHQILGKHASVKSTGCSTDSSIIVGTVEAYRQVCNAGRQVPQLDVDGFWLSIREKSVLIVGQSERGALYGAYEYLSMLAQGNFSQVSYATSPHAPIRWVNQWDNMDGSIERGYGGPSIFFKDGVIRQDLSRVQQYARLLASVRINGIIVNNVNANASLLMPSNMDGLARIADIFRPYGIRVGISLNFASPSTLGNLSTYDPFDSSVIAWWGNVTDQLYARIPDMAGYLVKANSEGQPGPTTYNRTLADGANMFARALKPYGGVVMFRAFVYDHHISEDNWYNDRANAAVDFFKPLDGKFDDNVVVQIKYGPIDFQVREPASPLFANLYKTNTAIELQVTQEYLGQQSHLVYLPPLWQTILGFDLRVDQKPSLVRDIISGQRFDRPLGGWAAVVNVGTNSTWLGSHLAMSNLYAYGRLAWEPTLDSEDIVQDWIRLTFGLDRRIVDTLTQMSMESWPAYENYSGNLGIQTLTDILYTHYGPNPASQDGNGWGQWTRADHLSIGMDRTVKNGTKFSGQYPAEVAAMYENIETTPDNLLLWFHHVNYTQRLHSGKTVIQHFYDAHYTGAETAQTFVSQWESLRERIDAERYQHVLTRLIYQAGHSIVWRDAINNFYHNLSGIADEKQRVGHHPWRVEAEDMQLDGYVPYAVSPFETASNYTAIVTASNGTTGTASATLDFKTGTYDLGINYYDMYGGKSHWTVYLNDRVVGQWQGNSEDVLSHTPSIYLDGHSATRITFRDVKIHKGDRLKIVGKPDGVEPAPLDYVVVLPPGIVD.

Positions 1–19 (MWSGIPIFALLSSIGIAAA) are cleaved as a signal peptide. N-linked (GlcNAc...) asparagine glycosylation is found at Asn50, Asn149, Asn222, Asn262, Asn279, Asn310, Asn465, Asn527, Asn576, Asn610, Asn682, Asn723, and Asn732.

Belongs to the glycosyl hydrolase 67 family.

Its subcellular location is the secreted. The catalysed reaction is an alpha-D-glucuronoside + H2O = D-glucuronate + an alcohol. Its function is as follows. Alpha-glucuronidase involved in the hydrolysis of xylan, a major structural heterogeneous polysaccharide found in plant biomass representing the second most abundant polysaccharide in the biosphere, after cellulose. Releases 4-O-methylglucuronic acid from xylan. This chain is Probable alpha-glucuronidase A (aguA), found in Aspergillus fumigatus (strain CBS 144.89 / FGSC A1163 / CEA10) (Neosartorya fumigata).